The following is a 65-amino-acid chain: Large ribosomal subunit protein uL29 (65 aa).

The protein belongs to the universal ribosomal protein uL29 family.

This Dehalococcoides mccartyi (strain ATCC BAA-2100 / JCM 16839 / KCTC 5957 / BAV1) protein is Large ribosomal subunit protein uL29.